We begin with the raw amino-acid sequence, 571 residues long: Urease subunit alpha (571 aa).

A Urease domain is found at 133-571 (GGIDTHIHFV…LPLAQRYFLF (439 aa)). 3 residues coordinate Ni(2+): His-138, His-140, and Lys-221. At Lys-221 the chain carries N6-carboxylysine. His-223 contacts substrate. Positions 250 and 276 each coordinate Ni(2+). Residue His-324 is the Proton donor of the active site. Residue Asp-364 participates in Ni(2+) binding.

Belongs to the metallo-dependent hydrolases superfamily. Urease alpha subunit family. Heterotrimer of UreA (gamma), UreB (beta) and UreC (alpha) subunits. Three heterotrimers associate to form the active enzyme. Requires Ni cation as cofactor. Post-translationally, carboxylation allows a single lysine to coordinate two nickel ions.

Its subcellular location is the cytoplasm. It carries out the reaction urea + 2 H2O + H(+) = hydrogencarbonate + 2 NH4(+). The protein operates within nitrogen metabolism; urea degradation; CO(2) and NH(3) from urea (urease route): step 1/1. This is Urease subunit alpha from Anaeromyxobacter sp. (strain K).